The sequence spans 399 residues: Formaldehyde dismutase (399 aa).

Cys-46 provides a ligand contact to Zn(2+). Residue 47–51 participates in NAD(+) binding; it reads GSDQH. Residues His-67, Cys-97, Cys-100, Cys-103, Cys-111, and Asp-170 each contribute to the Zn(2+) site. Thr-174 lines the NAD(+) pocket. His-177 contacts Zn(2+). NAD(+)-binding positions include 197–198, 218–219, Arg-223, Val-263, His-268, Pro-299, 299–301, and 336–338; these read PV, DQ, PGI, and GMA.

The protein belongs to the zinc-containing alcohol dehydrogenase family. In terms of assembly, homotetramer. Zn(2+) serves as cofactor. NAD(+) is required as a cofactor. It depends on NADH as a cofactor.

It carries out the reaction 2 formaldehyde + H2O = methanol + formate + H(+). Its activity is regulated as follows. Inhibited by the substrate analog pyrazole but not by NAD analogs such as AMP, ADP, ATP or N-methylnicotinamide chloride. Functionally, active against a range of primary alcohols as well as some secondary alcohols. Exhibits higher activity against alcohols with longer carbon chains. This is Formaldehyde dismutase from Pseudomonas putida (Arthrobacter siderocapsulatus).